Consider the following 232-residue polypeptide: Ribose-5-phosphate isomerase A (232 aa).

Substrate-binding positions include 31-34, 87-90, and 100-103; these read TGST, DGAD, and KGGG. Glutamate 109 functions as the Proton acceptor in the catalytic mechanism. Substrate is bound at residue lysine 127.

Belongs to the ribose 5-phosphate isomerase family. In terms of assembly, homodimer.

The catalysed reaction is aldehydo-D-ribose 5-phosphate = D-ribulose 5-phosphate. It functions in the pathway carbohydrate degradation; pentose phosphate pathway; D-ribose 5-phosphate from D-ribulose 5-phosphate (non-oxidative stage): step 1/1. In terms of biological role, catalyzes the reversible conversion of ribose-5-phosphate to ribulose 5-phosphate. The chain is Ribose-5-phosphate isomerase A from Bifidobacterium longum (strain NCC 2705).